The sequence spans 267 residues: Shikimate dehydrogenase (NADP(+)) (267 aa).

Shikimate contacts are provided by residues 14-16 (SLS) and threonine 61. Lysine 65 serves as the catalytic Proton acceptor. Residues asparagine 86 and aspartate 101 each coordinate shikimate. Residues 126–130 (GAGGA), 150–155 (NRTHSK), and leucine 213 contribute to the NADP(+) site. Tyrosine 215 provides a ligand contact to shikimate. Glycine 236 contributes to the NADP(+) binding site.

Belongs to the shikimate dehydrogenase family. Homodimer.

The catalysed reaction is shikimate + NADP(+) = 3-dehydroshikimate + NADPH + H(+). The protein operates within metabolic intermediate biosynthesis; chorismate biosynthesis; chorismate from D-erythrose 4-phosphate and phosphoenolpyruvate: step 4/7. Involved in the biosynthesis of the chorismate, which leads to the biosynthesis of aromatic amino acids. Catalyzes the reversible NADPH linked reduction of 3-dehydroshikimate (DHSA) to yield shikimate (SA). The protein is Shikimate dehydrogenase (NADP(+)) of Vesicomyosocius okutanii subsp. Calyptogena okutanii (strain HA).